The following is a 924-amino-acid chain: 104 kDa microneme/rhoptry antigen (924 aa).

A signal peptide spans 1–19 (MKFLILLFNILCLFPVLAA). A disordered region spans residues 490–907 (SKKKLAPITE…KKPKKPDSAY (418 aa)). 2 stretches are compositionally biased toward basic and acidic residues: residues 522–532 (PGDKEGSEGHK) and 573–588 (GPKDPKHPRDPKEPRK). A compositionally biased stretch (low complexity) spans 592 to 617 (PRTASPTRRPSPKLPQLSKLPKSTSP). Basic and acidic residues predominate over residues 653 to 673 (SFKEKFYDDYSKAASRSKETK). The span at 724 to 736 (SPSTSPSEFFTPP) shows a compositional bias: low complexity. 3 stretches are compositionally biased toward basic and acidic residues: residues 737–747 (ESKRTRFHETP), 770–783 (KSPDEAMKRPRSPS), and 816–825 (DPGRMAKDAS). Acidic residues predominate over residues 857–867 (DDEGTEADDEE). Positions 868-878 (THPPEERQKTE) are enriched in basic and acidic residues. Basic residues predominate over residues 879–901 (VRRRRPPKKPSKSPRPSKPKKPK). Asp904 carries GPI-anchor amidated aspartate lipidation. The propeptide at 905–924 (SAYIPSILAILVVSLIVGIL) is removed in mature form.

It localises to the cell membrane. In Theileria parva (East coast fever infection agent), this protein is 104 kDa microneme/rhoptry antigen.